Consider the following 538-residue polypeptide: Protein NRT1/ PTR FAMILY 5.11 (538 aa).

The next 2 helical transmembrane spans lie at 44-64 and 74-94; these read FAYF…LGES and AWTG…DSYL. At threonine 99 the chain carries Phosphothreonine. The next 10 membrane-spanning stretches (helical) occupy residues 100–120, 134–154, 175–194, 204–224, 308–328, 342–362, 389–409, 424–444, 463–483, and 507–527; these read IIIS…STMI, TIFF…NPCI, SFFN…TRLV, WSLG…LFLL, IPIW…PTFF, GLLV…VVFI, IGTG…VETK, VWWL…TMVG, ALNL…ISVI, and YFYW…LWFA.

Belongs to the major facilitator superfamily. Proton-dependent oligopeptide transporter (POT/PTR) (TC 2.A.17) family. In terms of tissue distribution, expressed in shoots and roots.

The protein localises to the membrane. This chain is Protein NRT1/ PTR FAMILY 5.11 (NPF5.11), found in Arabidopsis thaliana (Mouse-ear cress).